A 218-amino-acid chain; its full sequence is Adenylate kinase (218 aa).

Position 10 to 15 (Gly-10 to Thr-15) interacts with ATP. Residues Ser-30–Val-59 form an NMP region. Residues Thr-31, Arg-36, Glu-57–Val-59, and Gln-92 each bind AMP. The interval Gly-122–Asp-159 is LID. ATP-binding positions include Arg-123 and Thr-132–Tyr-133. AMP-binding residues include Arg-156 and Arg-167. Gln-202 provides a ligand contact to ATP.

The protein belongs to the adenylate kinase family. As to quaternary structure, monomer.

The protein resides in the cytoplasm. It carries out the reaction AMP + ATP = 2 ADP. It functions in the pathway purine metabolism; AMP biosynthesis via salvage pathway; AMP from ADP: step 1/1. Functionally, catalyzes the reversible transfer of the terminal phosphate group between ATP and AMP. Plays an important role in cellular energy homeostasis and in adenine nucleotide metabolism. This Francisella tularensis subsp. holarctica (strain LVS) protein is Adenylate kinase.